The following is a 175-amino-acid chain: Inorganic pyrophosphatase (175 aa).

The substrate site is built by K30, R44, and Y56. Residues D66, D71, and D103 each contribute to the Mg(2+) site. Y140 serves as a coordination point for substrate.

This sequence belongs to the PPase family. In terms of assembly, homohexamer. The cofactor is Mg(2+).

It localises to the cytoplasm. It catalyses the reaction diphosphate + H2O = 2 phosphate + H(+). Catalyzes the hydrolysis of inorganic pyrophosphate (PPi) forming two phosphate ions. This chain is Inorganic pyrophosphatase, found in Thermus thermophilus (strain ATCC 27634 / DSM 579 / HB8).